We begin with the raw amino-acid sequence, 355 residues long: 3-dehydroquinate synthase (355 aa).

NAD(+)-binding positions include 71 to 76, 105 to 109, 129 to 130, K142, K151, and 169 to 172; these read EGEASK, GVVGD, TS, and TLKT. Positions 184, 246, and 263 each coordinate Zn(2+).

It belongs to the sugar phosphate cyclases superfamily. Dehydroquinate synthase family. Co(2+) is required as a cofactor. The cofactor is Zn(2+). Requires NAD(+) as cofactor.

It is found in the cytoplasm. It catalyses the reaction 7-phospho-2-dehydro-3-deoxy-D-arabino-heptonate = 3-dehydroquinate + phosphate. It participates in metabolic intermediate biosynthesis; chorismate biosynthesis; chorismate from D-erythrose 4-phosphate and phosphoenolpyruvate: step 2/7. Catalyzes the conversion of 3-deoxy-D-arabino-heptulosonate 7-phosphate (DAHP) to dehydroquinate (DHQ). In Streptococcus suis (strain 98HAH33), this protein is 3-dehydroquinate synthase.